The primary structure comprises 578 residues: Kelch-like protein 30 (578 aa).

Residues 33 to 100 form the BTB domain; the sequence is ADVTLLVGGR…VYTGRLTITQ (68 aa). The region spanning 153–255 is the BACK domain; that stretch reads KAWAFLRENF…EACRAALSQG (103 aa). 6 Kelch repeats span residues 270-326, 327-377, 378-422, 424-471, 473-513, and 514-563; these read VLVV…ALNN, NIYV…ALNG, EIYV…GCRG, LYLV…ALHG, LYLI…PLGD, and ALYV…TVFL.

The chain is Kelch-like protein 30 (KLHL30) from Homo sapiens (Human).